Here is a 423-residue protein sequence, read N- to C-terminus: Histidine--tRNA ligase (423 aa).

The protein belongs to the class-II aminoacyl-tRNA synthetase family. As to quaternary structure, homodimer.

Its subcellular location is the cytoplasm. The catalysed reaction is tRNA(His) + L-histidine + ATP = L-histidyl-tRNA(His) + AMP + diphosphate + H(+). This is Histidine--tRNA ligase from Orientia tsutsugamushi (strain Boryong) (Rickettsia tsutsugamushi).